Reading from the N-terminus, the 331-residue chain is Peroxisomal nicotinamide adenine dinucleotide carrier (331 aa).

Solcar repeat units follow at residues 2–91 (SDAL…FRNR), 109–216 (VGMF…MLTK), and 229–320 (VTAL…LVKG). Transmembrane regions (helical) follow at residues 5 to 25 (LINGLAGAGGGIIAQLLTYPL), 63 to 85 (LYGGLAPSLAGTAASQGVYYYFY), 116 to 136 (LVAAFAGSVNVLMTNPIWVIV), 180 to 200 (VYDEAGITGFWKGVIPTLIMV), 235 to 255 (FLLGAVAKLGATVTTYPLLVV), and 293 to 313 (YKGMSTKIVQSVLAAAVLFMI).

This sequence belongs to the mitochondrial carrier (TC 2.A.29) family. Homodimer. As to expression, expressed in cotyledons, hypocotyls, vascular tissues, trichomes, hydathodes, seeds, pedicels, flowers and stigma.

It is found in the glyoxysome membrane. Inhibited by pyridoxal 5'-phosphate, bathophenanthroline, tannic acid, mersalyl, mercuric chloride and bromocresol purple. Mediates the NAD(+) import into peroxisomes. Favors the NAD(+)(in)/AMP(out) antiport exchange, but is also able to catalyze a low unidirectional transport that might be essential under special conditions. Transports CoA, dephospho-CoA, acetyl-CoA, adenosine 3',5'-diphosphate (PAP), NAD(+), AMP, ADP and NADH, but has no activity with ATP, GTP, GDP, NADPH, NADP(+) or FAD. Required for peroxisomes proliferation. The protein is Peroxisomal nicotinamide adenine dinucleotide carrier (PXN) of Arabidopsis thaliana (Mouse-ear cress).